The following is a 314-amino-acid chain: Probable cell division protein WhiA (314 aa).

Positions 282–314 (SLKELGELCRPPVSKSGAAHRMRQLMALAESLE) form a DNA-binding region, H-T-H motif.

This sequence belongs to the WhiA family.

Involved in cell division and chromosome segregation. This chain is Probable cell division protein WhiA, found in Symbiobacterium thermophilum (strain DSM 24528 / JCM 14929 / IAM 14863 / T).